The chain runs to 406 residues: 5-cytosine rRNA methyltransferase NSUN4 (406 aa).

Residues G207, G208, K209, D226, R231, D259, G260, and D277 each coordinate S-adenosyl-L-methionine. C332 (nucleophile) is an active-site residue.

The protein belongs to the class I-like SAM-binding methyltransferase superfamily. RsmB/NOP family.

It localises to the mitochondrion. The catalysed reaction is a cytidine in rRNA + S-adenosyl-L-methionine = a 5-methylcytidine in rRNA + S-adenosyl-L-homocysteine + H(+). The enzyme catalyses a cytidine in mRNA + S-adenosyl-L-methionine = a 5-methylcytidine in mRNA + S-adenosyl-L-homocysteine + H(+). Its function is as follows. Involved in mitochondrial ribosome large subunit biogenesis. In terms of biological role, mitochondrial RNA cytosine C(5)-methyltransferase that methylates cytosine to 5-methylcytosine (m5C) in various RNAs, such as rRNAs, mRNAs and some long non-coding RNAs (lncRNAs). Involved in mitochondrial ribosome small subunit (SSU) maturation by catalyzing methylation of mitochondrial 12S rRNA. The chain is 5-cytosine rRNA methyltransferase NSUN4 (nsun4) from Xenopus tropicalis (Western clawed frog).